The sequence spans 241 residues: Ribosomal RNA small subunit methyltransferase J (241 aa).

S-adenosyl-L-methionine is bound by residues 94 to 95 and Asp163; that span reads RD.

It belongs to the methyltransferase superfamily. RsmJ family.

The protein resides in the cytoplasm. The enzyme catalyses guanosine(1516) in 16S rRNA + S-adenosyl-L-methionine = N(2)-methylguanosine(1516) in 16S rRNA + S-adenosyl-L-homocysteine + H(+). Functionally, specifically methylates the guanosine in position 1516 of 16S rRNA. This is Ribosomal RNA small subunit methyltransferase J from Francisella tularensis subsp. novicida (strain U112).